Reading from the N-terminus, the 630-residue chain is Glutathione hydrolase proenzyme 1 (630 aa).

Over 1–49 (MGINTSSAQSSGAASIARSSVNVKSGNRHLSSNKKSATSALEERASRPS) the chain is Cytoplasmic. Residues 50 to 70 (ILVTFLVLAGTILSLYIWPIL) form a helical; Signal-anchor for type II membrane protein membrane-spanning segment. Residues 71-630 (SPDLFFANQR…SRKQAVAAAY (560 aa)) lie on the Lumenal side of the membrane. The N-linked (GlcNAc...) asparagine glycan is linked to Asn156. Residue Arg165 coordinates L-glutamate. N-linked (GlcNAc...) asparagine glycans are attached at residues Asn180, Asn315, Asn397, and Asn417. Thr441 functions as the Nucleophile in the catalytic mechanism. L-glutamate contacts are provided by residues Ser459, Asn461, Asp483, 511–512 (SS), and 532–533 (GG). Asn612 is a glycosylation site (N-linked (GlcNAc...) asparagine).

This sequence belongs to the gamma-glutamyltransferase family. In terms of assembly, heterodimer composed of the light and heavy chains. The active site is located in the light chain. Post-translationally, cleaved by autocatalysis into a large and a small subunit.

The protein resides in the endoplasmic reticulum membrane. The catalysed reaction is an N-terminal (5-L-glutamyl)-[peptide] + an alpha-amino acid = 5-L-glutamyl amino acid + an N-terminal L-alpha-aminoacyl-[peptide]. It carries out the reaction glutathione + H2O = L-cysteinylglycine + L-glutamate. It catalyses the reaction an S-substituted glutathione + H2O = an S-substituted L-cysteinylglycine + L-glutamate. The protein operates within sulfur metabolism; glutathione metabolism. Catalyzes the transfer of the gamma-glutamyl moiety of glutathione (GSH) and other gamma-glutamyl compounds to amino acids and peptides. Major GSH-degrading enzyme, catalyzing the hydrolytic release of L-glutamate from GSH. The protein is Glutathione hydrolase proenzyme 1 (ggt1) of Schizosaccharomyces pombe (strain 972 / ATCC 24843) (Fission yeast).